The following is a 110-amino-acid chain: Thiosulfate sulfurtransferase GlpE (110 aa).

Residues K17–A105 form the Rhodanese domain. C65 acts as the Cysteine persulfide intermediate in catalysis.

Belongs to the GlpE family.

The protein localises to the cytoplasm. It carries out the reaction thiosulfate + hydrogen cyanide = thiocyanate + sulfite + 2 H(+). The enzyme catalyses thiosulfate + [thioredoxin]-dithiol = [thioredoxin]-disulfide + hydrogen sulfide + sulfite + 2 H(+). Its function is as follows. Transferase that catalyzes the transfer of sulfur from thiosulfate to thiophilic acceptors such as cyanide or dithiols. May function in a CysM-independent thiosulfate assimilation pathway by catalyzing the conversion of thiosulfate to sulfite, which can then be used for L-cysteine biosynthesis. The sequence is that of Thiosulfate sulfurtransferase GlpE from Pseudomonas putida (strain GB-1).